A 1210-amino-acid polypeptide reads, in one-letter code: ATP-dependent helicase/nuclease subunit A (1210 aa).

The UvrD-like helicase ATP-binding domain maps to 27–483; it reads QKRTAQQIEA…ILLKENFRSQ (457 aa). 48–55 is an ATP binding site; that stretch reads ASAGSGKT. Positions 512–798 constitute a UvrD-like helicase C-terminal domain; the sequence is QLIAGSHAQT…NLMTIHKSKG (287 aa).

It belongs to the helicase family. AddA subfamily. Heterodimer of AddA and AddB/RexB. Requires Mg(2+) as cofactor.

It carries out the reaction Couples ATP hydrolysis with the unwinding of duplex DNA by translocating in the 3'-5' direction.. The enzyme catalyses ATP + H2O = ADP + phosphate + H(+). The heterodimer acts as both an ATP-dependent DNA helicase and an ATP-dependent, dual-direction single-stranded exonuclease. Recognizes the chi site generating a DNA molecule suitable for the initiation of homologous recombination. The AddA nuclease domain is required for chi fragment generation; this subunit has the helicase and 3' -&gt; 5' nuclease activities. In Streptococcus pyogenes serotype M5 (strain Manfredo), this protein is ATP-dependent helicase/nuclease subunit A.